A 454-amino-acid chain; its full sequence is tRNA-2-methylthio-N(6)-dimethylallyladenosine synthase (454 aa).

Residues 6 to 122 form the MTTase N-terminal domain; the sequence is RRYHITTFGC…LKDLLESVFA (117 aa). The [4Fe-4S] cluster site is built by Cys15, Cys51, Cys85, Cys157, Cys161, and Cys164. The Radical SAM core domain occupies 143 to 380; sequence RDSTVTAWVN…NHLVNVKAAE (238 aa). In terms of domain architecture, TRAM spans 383–447; the sequence is QRYMGRIEEV…AFSLTGEPIE (65 aa).

The protein belongs to the methylthiotransferase family. MiaB subfamily. In terms of assembly, monomer. Requires [4Fe-4S] cluster as cofactor.

The protein resides in the cytoplasm. The catalysed reaction is N(6)-dimethylallyladenosine(37) in tRNA + (sulfur carrier)-SH + AH2 + 2 S-adenosyl-L-methionine = 2-methylsulfanyl-N(6)-dimethylallyladenosine(37) in tRNA + (sulfur carrier)-H + 5'-deoxyadenosine + L-methionine + A + S-adenosyl-L-homocysteine + 2 H(+). In terms of biological role, catalyzes the methylthiolation of N6-(dimethylallyl)adenosine (i(6)A), leading to the formation of 2-methylthio-N6-(dimethylallyl)adenosine (ms(2)i(6)A) at position 37 in tRNAs that read codons beginning with uridine. In Nostoc sp. (strain PCC 7120 / SAG 25.82 / UTEX 2576), this protein is tRNA-2-methylthio-N(6)-dimethylallyladenosine synthase.